The chain runs to 345 residues: Protein-glutamate methylesterase/protein-glutamine glutaminase (345 aa).

One can recognise a Response regulatory domain in the interval 5–123 (KVIVVDDSVL…ELSKMKDDLI (119 aa)). Asp-56 bears the 4-aspartylphosphate mark. Residues 153–343 (SSDSIEAVVI…DEIIKIVRGL (191 aa)) form the CheB-type methylesterase domain. Active-site residues include Ser-165, His-192, and Asp-285.

It belongs to the CheB family. In terms of processing, phosphorylated by CheA. Phosphorylation of the N-terminal regulatory domain activates the methylesterase activity.

Its subcellular location is the cytoplasm. The catalysed reaction is [protein]-L-glutamate 5-O-methyl ester + H2O = L-glutamyl-[protein] + methanol + H(+). It carries out the reaction L-glutaminyl-[protein] + H2O = L-glutamyl-[protein] + NH4(+). Its function is as follows. Involved in chemotaxis. Part of a chemotaxis signal transduction system that modulates chemotaxis in response to various stimuli. Catalyzes the demethylation of specific methylglutamate residues introduced into the chemoreceptors (methyl-accepting chemotaxis proteins or MCP) by CheR. Also mediates the irreversible deamidation of specific glutamine residues to glutamic acid. The protein is Protein-glutamate methylesterase/protein-glutamine glutaminase of Clostridium acetobutylicum (strain ATCC 824 / DSM 792 / JCM 1419 / IAM 19013 / LMG 5710 / NBRC 13948 / NRRL B-527 / VKM B-1787 / 2291 / W).